Consider the following 55-residue polypeptide: ATP synthase protein 8 (55 aa).

Residues 4–24 (LNPNPWFTILIFTWAVFLTIL) form a helical membrane-spanning segment.

Belongs to the ATPase protein 8 family. As to quaternary structure, F-type ATPases have 2 components, CF(1) - the catalytic core - and CF(0) - the membrane proton channel.

The protein localises to the mitochondrion membrane. Functionally, mitochondrial membrane ATP synthase (F(1)F(0) ATP synthase or Complex V) produces ATP from ADP in the presence of a proton gradient across the membrane which is generated by electron transport complexes of the respiratory chain. F-type ATPases consist of two structural domains, F(1) - containing the extramembraneous catalytic core and F(0) - containing the membrane proton channel, linked together by a central stalk and a peripheral stalk. During catalysis, ATP synthesis in the catalytic domain of F(1) is coupled via a rotary mechanism of the central stalk subunits to proton translocation. Part of the complex F(0) domain. Minor subunit located with subunit a in the membrane. In Polypterus ornatipinnis (Ornate bichir), this protein is ATP synthase protein 8 (mt-atp8).